We begin with the raw amino-acid sequence, 496 residues long: MSTEHMEELNDQQIVRREKMAALREQGIDPFGKRFERTANSQELKDKYANLDKEQLHDKNETATIAGRLVTKRGKGKVGFAHLQDREGQIQIYVRKDAVGEENYEIFKKADLGDFLGVEGEVMRTDMGELSIKATHITHLSKALRPLPEKFHGLTDVETIYRKRYLDLISNRESFERFVTRSKIISEIRRYLDQKGFLEVETPVLHNEAGGAAARPFITHHNAQNIDMVLRIATELHLKRLIVGGMERVYEIGRIFRNEGMDATHNPEFTSIEVYQAYADFQDIMDLTEGIIQHAAKSVKGDGPVNYQGTEIKINEPFKRVHMVDAIREITGVDFWQDMTLKEAKAIAAEKKVPVEKHYTEVGHIINAFFEEFVEETLIQPTFVYGHPVAVSPLAKKNPEDQRFTDRFELFIMTKEYGNAFTELNDPIDQLSRFEAQAKAKELGDDEATGIDYDYIEALEYGMPPTGGLGIGIDRLCMLLTDTTTIRDVLLFPTMK.

Mg(2+) is bound by residues glutamate 409 and glutamate 416.

The protein belongs to the class-II aminoacyl-tRNA synthetase family. In terms of assembly, homodimer. Mg(2+) serves as cofactor.

The protein localises to the cytoplasm. The enzyme catalyses tRNA(Lys) + L-lysine + ATP = L-lysyl-tRNA(Lys) + AMP + diphosphate. The sequence is that of Lysine--tRNA ligase from Streptococcus pneumoniae (strain Hungary19A-6).